The chain runs to 251 residues: Seminal metalloprotease 1 (251 aa).

The first 18 residues, 1–18, serve as a signal peptide directing secretion; sequence MFPQIWGVIFLFTPTVFS. The region spanning 44–248 is the Peptidase M12A domain; that stretch reads NGIVNQIYHW…RKLNKMYRCP (205 aa). N-linked (GlcNAc...) asparagine glycosylation is found at asparagine 55 and asparagine 120. 2 disulfide bridges follow: cysteine 87–cysteine 247 and cysteine 111–cysteine 136. Position 144 (histidine 144) interacts with Zn(2+). The active site involves glutamate 145. Zn(2+) is bound by residues histidine 148 and histidine 154. N-linked (GlcNAc...) asparagine glycosylation is present at asparagine 185.

The cofactor is Zn(2+). In terms of processing, undergoes cleavage in the male during mating with a cleaved product detected in the ejaculatory duct and/or bulb of males by 8-10 minutes after the start of mating. Further cleavage occurs in the mated female. May undergo cleavage in a two-step process where it is first cleaved by Sems, making it susceptible to activational cleavage which may be carried out by another protease or by autocleavage. As to expression, produced in the male accessory glands and secreted into seminal fluid. In mated females, confined to the reproductive tract and also detected in eggs laid by mated females (at protein level).

The protein resides in the secreted. Functionally, seminal fluid metalloprotease which is transferred to females during mating and is required for processing of two other seminal fluid proteins Acp26Aa and Acp36DE in mated females. In Drosophila melanogaster (Fruit fly), this protein is Seminal metalloprotease 1.